Consider the following 286-residue polypeptide: tRNA dimethylallyltransferase (286 aa).

Residues 18–21 are interaction with substrate tRNA; that stretch reads DSMQ.

The protein belongs to the IPP transferase family. Monomer. The cofactor is Mg(2+).

The catalysed reaction is adenosine(37) in tRNA + dimethylallyl diphosphate = N(6)-dimethylallyladenosine(37) in tRNA + diphosphate. Functionally, catalyzes the transfer of a dimethylallyl group onto the adenine at position 37 in tRNAs that read codons beginning with uridine, leading to the formation of N6-(dimethylallyl)adenosine (i(6)A). The protein is tRNA dimethylallyltransferase of Tropheryma whipplei (strain TW08/27) (Whipple's bacillus).